The sequence spans 719 residues: ATP-dependent RNA helicase p62 (719 aa).

The interval alanine 94 to valine 234 is disordered. Composition is skewed to basic and acidic residues over residues alanine 99–serine 108 and glutamate 137–glycine 171. A compositionally biased stretch (gly residues) spans glycine 172–tyrosine 188. Residues glycine 194–glycine 205 show a composition bias toward basic and acidic residues. The span at glycine 206 to serine 226 shows a compositional bias: gly residues. The Q motif motif lies at glutamine 281–alanine 309. Residues tryptophan 312–isoleucine 487 enclose the Helicase ATP-binding domain. Alanine 325–threonine 332 contacts ATP. Positions aspartate 435 to aspartate 438 match the DEAD box motif. Residues leucine 519–alanine 664 enclose the Helicase C-terminal domain. The interval glycine 689 to aspartate 719 is disordered. Gly residues predominate over residues arginine 701 to glycine 711.

It belongs to the DEAD box helicase family. DDX5/DBP2 subfamily. As to quaternary structure, interacts with Fmr1 to form the RNA-induced silencing complex (RISC), a ribonucleoprotein (RNP) complex involved in translation regulation, other components of the complex are RpL5, RpL11, AGO2 and Dcr-1.

The protein localises to the nucleus. Its subcellular location is the nucleolus. It is found in the cytoplasm. It localises to the cytosol. It carries out the reaction ATP + H2O = ADP + phosphate + H(+). In terms of biological role, as an RNA helicase, unwinds RNA and alters RNA structures through ATP binding and hydrolysis. Involved in multiple cellular processes, including pre-mRNA splicing, alternative splicing, rRNA processing and miRNA processing, as well as transcription regulation. Plays a role in innate immunity. Specifically restricts bunyavirus infection, including Rift Valley fever virus (RVFV) or La Crosse virus (LACV), but not vesicular stomatitis virus (VSV), in an interferon- and DROSHA-independent manner. The protein is ATP-dependent RNA helicase p62 (Rm62) of Drosophila melanogaster (Fruit fly).